We begin with the raw amino-acid sequence, 494 residues long: GTPase Der (494 aa).

2 consecutive EngA-type G domains span residues 3-166 and 206-379; these read PVVA…AEQM and IKLA…RSAT. GTP-binding positions include 9–16, 56–60, 118–121, 212–219, 259–263, and 324–327; these read GRPNVGKS, DTGGI, NKVD, DTAGV, and NKWD. The KH-like domain occupies 380 to 464; the sequence is TRVGTSVLTR…PIRIQFQNSE (85 aa).

This sequence belongs to the TRAFAC class TrmE-Era-EngA-EngB-Septin-like GTPase superfamily. EngA (Der) GTPase family. As to quaternary structure, associates with the 50S ribosomal subunit.

In terms of biological role, GTPase that plays an essential role in the late steps of ribosome biogenesis. The chain is GTPase Der from Vibrio cholerae serotype O1 (strain ATCC 39541 / Classical Ogawa 395 / O395).